The primary structure comprises 358 residues: MLKTPLYESHIAANAKMVDFSGWSMPINYGSQIQEHNNVREDCGIFDVSHMLAVDIQGSEAEKFLRYLLANDIAKLQENKAQYGCMLNHDAGIVDDLITYKVTDEHFRIVVNAGNRESDVAWFNQNAQNFDVAITPQTDLAIVAVQGPKAVAVIKRVVTKEIAAEIEALLPFSFKFFSKWMVARTGYTGEDGFEVILPATQVKKFWDSLLENGAQPAGLGARDTLRLEAGMHLYGADMDTSTTPLERGLGWSVDLSDEHRDFIGKKAYLAKKAQGVDTKWVGVVLKTKGVLRAGQEIDFDNGEKGYITSGSFSPTLKVAIGLAYVPKQADNPVVNIRGKELEVELVKPKFVKNGKSLI.

The protein belongs to the GcvT family. The glycine cleavage system is composed of four proteins: P, T, L and H.

It carries out the reaction N(6)-[(R)-S(8)-aminomethyldihydrolipoyl]-L-lysyl-[protein] + (6S)-5,6,7,8-tetrahydrofolate = N(6)-[(R)-dihydrolipoyl]-L-lysyl-[protein] + (6R)-5,10-methylene-5,6,7,8-tetrahydrofolate + NH4(+). Its function is as follows. The glycine cleavage system catalyzes the degradation of glycine. This is Aminomethyltransferase from Francisella tularensis subsp. mediasiatica (strain FSC147).